We begin with the raw amino-acid sequence, 151 residues long: Exosporium protein B (151 aa).

It is found in the spore wall. In Clostridium sporogenes (strain ATCC 15579), this protein is Exosporium protein B.